A 519-amino-acid polypeptide reads, in one-letter code: Putative glucosylceramidase 4 (519 aa).

Positions 1–24 are cleaved as a signal peptide; sequence MILNISVSLLIFLAFYGFSSDAKS. The Proton donor role is filled by Glu-256. The active-site Nucleophile is the Glu-361.

It belongs to the glycosyl hydrolase 30 family.

It carries out the reaction a beta-D-glucosylceramide + H2O = an N-acyl-sphingoid base + D-glucose. The catalysed reaction is a beta-D-glucosyl-(1&lt;-&gt;1')-N-acylsphing-4-enine + H2O = an N-acylsphing-4-enine + D-glucose. It catalyses the reaction an N-acyl-1-beta-D-glucosyl-15-methylhexadecasphing-4-enine + H2O = an N-acyl-15-methylhexadecasphing-4-enine + D-glucose. The protein operates within lipid metabolism; sphingolipid metabolism. Its function is as follows. Glucosylceramidase that catalyzes the hydrolysis of glucosylceramides into free ceramides and glucose. C.elegans contains specific sphingoid bases, which are unique or different in structure compared to the sphingoid bases found in other animals. Two examples of these distinctive compounds are: 15-methylhexadecasphinganine and 15-methylhexadecasphing-4-enine. In Caenorhabditis elegans, this protein is Putative glucosylceramidase 4 (gba-4).